The chain runs to 306 residues: Glutaminase (306 aa).

Ser-62, Asn-114, Glu-159, Asn-166, Tyr-190, Tyr-242, and Val-260 together coordinate substrate.

It belongs to the glutaminase family. Homotetramer.

It carries out the reaction L-glutamine + H2O = L-glutamate + NH4(+). This is Glutaminase from Clostridium tetani (strain Massachusetts / E88).